Here is a 1306-residue protein sequence, read N- to C-terminus: Putative late blight resistance protein homolog R1A-10 (1306 aa).

Coiled-coil stretches lie at residues 407 to 428 (SDSL…ESLQ) and 520 to 542 (PRMK…KLLS). Residues 521–808 (RMKEEIVGFE…SEAFIKSSEG (288 aa)) form the NB-ARC domain. Residue 554-561 (GMPGLGKT) coordinates ATP. LRR repeat units lie at residues 858–881 (AEEN…VYSH), 921–935 (LSSL…ILPN), 936–961 (FKFL…PYLR), 979–1007 (LWNL…VWDM), 1010–1035 (LRHL…NLDD), 1057–1081 (TPNL…ALNF), 1082–1106 (PIRL…ISAP), 1110–1129 (YLKL…TADH), 1130–1153 (LKNL…KVSN), 1156–1181 (FPQL…AFPN), and 1216–1240 (ESVV…NFKL). An HMA domain is found at 1240–1306 (LVLIEKWPKF…KLRKCGMPGL (67 aa)).

This sequence belongs to the disease resistance NB-LRR family.

It is found in the cytoplasm. The protein resides in the membrane. Functionally, confers resistance to late blight (Phytophthora infestans) races carrying the avirulence gene Avr1. Resistance proteins guard the plant against pathogens that contain an appropriate avirulence protein via an indirect interaction with this avirulence protein. That triggers a defense system including the hypersensitive response, which restricts the pathogen growth. This chain is Putative late blight resistance protein homolog R1A-10 (R1A-10), found in Solanum demissum (Wild potato).